The sequence spans 1784 residues: Histone acetyltransferase KAT6B (1784 aa).

Residues 1-77 form the SAMD1-like winged helix (WH) domain; sequence MVKLANPLYT…LASYKDPDNP (77 aa). The tract at residues 72–98 is disordered; the sequence is KDPDNPGRFSSVKPGTFPKSTKESRGS. The region spanning 103 to 176 is the H15 domain; sequence RNVDWNKLLR…KDGPQYRVNY (74 aa). PHD-type zinc fingers lie at residues 213–272 and 269–320; these read IPIC…CKTC and CKTC…CRPK. At S355 the chain carries Phosphoserine. A negatively regulates HAT activity region spans residues 361 to 425; the sequence is GSMNAFTGRG…ECESGVEDCG (65 aa). A Glycyl lysine isopeptide (Lys-Gly) (interchain with G-Cter in SUMO2) cross-link involves residue K381. One can recognise an MYST-type HAT domain in the interval 423–697; sequence DCGRYPSVIE…LDPDSLRWTP (275 aa). Positions 426–716 are catalytic; it reads RYPSVIEFGK…EEEREAEKEA (291 aa). The segment at 456–481 adopts a C2HC MYST-type zinc-finger fold; it reads LYLCEFCLKYMKSKNILLRHSKKCGW. The segment at 460–716 is interaction with BRPF1; the sequence is EFCLKYMKSK…EEEREAEKEA (257 aa). Residue K523 is modified to N6-acetyllysine; by autocatalysis. Residues 564–568 and 573–579 each bind acetyl-CoA; these read SCIMI and QRQGFGR. E599 acts as the Proton donor/acceptor in catalysis. S603 contributes to the acetyl-CoA binding site. Disordered stretches follow at residues 730-884, 904-1163, 1195-1273, and 1291-1330; these read EQEV…RPMP, RKAF…FKEV, SCNS…FQDC, and QSPQIATTLDDCQQSDHSSPVSSVHSHPGQSVRSVNSPSV. The span at 733–751 shows a compositional bias: polar residues; the sequence is VLSTRANSRQSPAKVQSKN. N6-acetyllysine is present on residues K746, K750, and K752. Position 756 is a phosphoserine (S756). A compositionally biased stretch (acidic residues) spans 777-819; the sequence is SEEEEEEEEDEEEEDEEEEEEEEEDEEEEEEEEEEEEEEEEEN. The segment covering 820–831 has biased composition (polar residues); it reads IQSSPPRLTKPQ. The span at 835 to 854 shows a compositional bias: basic residues; the sequence is IKRKRPFVLKKKRGRKRRRI. The span at 856 to 869 shows a compositional bias: low complexity; it reads SSVTTETISETTEV. Residues 904-914 are compositionally biased toward basic residues; it reads RKAFQHQPGKK. 2 stretches are compositionally biased toward basic and acidic residues: residues 938–957 and 1055–1064; these read MNDDSRNLKEGSKDNPEPLK and EKPEDDLIKP. Residues 1065-1087 are compositionally biased toward acidic residues; that stretch reads EEEEEEEEEEEEEEGEEEEEEGG. Composition is skewed to basic and acidic residues over residues 1088-1101 and 1107-1118; these read NVEKDPDGAKSQEK and SPEKEDSARLDD. The segment covering 1119 to 1128 has biased composition (acidic residues); it reads HEEEEEEDEE. The span at 1144–1163 shows a compositional bias: basic and acidic residues; the sequence is HMESAEVEKEELPRESFKEV. The span at 1209–1218 shows a compositional bias: acidic residues; it reads AVPESDEEPP. Basic and acidic residues predominate over residues 1224 to 1240; that stretch reads QKQDQKNSKEVDTEFKE. 2 stretches are compositionally biased toward polar residues: residues 1251-1263 and 1291-1302; these read ETVQAVQSLTQES and QSPQIATTLDDC. The segment at 1271–1784 is interaction with RUNX1 and RUNX2; that stretch reads QDCAETQEAC…QSLNGSYMRR (514 aa). Low complexity predominate over residues 1305–1322; it reads SDHSSPVSSVHSHPGQSV.

This sequence belongs to the MYST (SAS/MOZ) family. Component of the MOZ/MORF complex composed at least of ING5, KAT6A, KAT6B, MEAF6 and one of BRPF1, BRD1/BRPF2 and BRPF3. Interacts with RUNX1 and RUNX2. In terms of processing, autoacetylation at Lys-523 is required for proper function.

The protein resides in the nucleus. It catalyses the reaction L-lysyl-[protein] + acetyl-CoA = N(6)-acetyl-L-lysyl-[protein] + CoA + H(+). Its function is as follows. Histone acetyltransferase which may be involved in both positive and negative regulation of transcription. Required for RUNX2-dependent transcriptional activation. May be involved in cerebral cortex development. Component of the MOZ/MORF complex which has a histone H3 acetyltransferase activity. The protein is Histone acetyltransferase KAT6B (KAT6B) of Macaca fascicularis (Crab-eating macaque).